Consider the following 403-residue polypeptide: Aminomethyltransferase, mitochondrial (403 aa).

The transit peptide at 1–28 directs the protein to the mitochondrion; that stretch reads MQRAMTVVPHLGLRLQALPLALGRPLSR. Substrate-binding residues include Glu232, Arg261, and Tyr399.

It belongs to the GcvT family. In terms of assembly, the glycine cleavage system is composed of four proteins: P, T, L and H.

It localises to the mitochondrion. The catalysed reaction is N(6)-[(R)-S(8)-aminomethyldihydrolipoyl]-L-lysyl-[protein] + (6S)-5,6,7,8-tetrahydrofolate = N(6)-[(R)-dihydrolipoyl]-L-lysyl-[protein] + (6R)-5,10-methylene-5,6,7,8-tetrahydrofolate + NH4(+). Its function is as follows. The glycine cleavage system catalyzes the degradation of glycine. The polypeptide is Aminomethyltransferase, mitochondrial (Canis lupus familiaris (Dog)).